The primary structure comprises 101 residues: Apolipoprotein C-II (101 aa).

Positions 1–22 (MGTRCLLVLLLVLLVLRCDVQG) are cleaved as a signal peptide. Positions 23–28 (DDMARQ) are cleaved as a propeptide — removed in mature form. The interval 66–74 (AVDEKIRDM) is lipid binding. The tract at residues 78 to 101 (STAAVRIYTGILTDQILSMLSGDS) is lipoprotein lipase cofactor.

It belongs to the apolipoprotein C2 family. Proapolipoprotein C-II is synthesized as a sialic acid containing glycoprotein which is subsequently desialylated prior to its proteolytic processing. Post-translationally, proapolipoprotein C-II, the major form found in plasma undergoes proteolytic cleavage of its N-terminal hexapeptide to generate the mature form apolipoprotein C-II, which occurs as the minor form in plasma.

It localises to the secreted. In terms of biological role, component of chylomicrons, very low-density lipoproteins (VLDL), low-density lipoproteins (LDL), and high-density lipoproteins (HDL) in plasma. Plays an important role in lipoprotein metabolism as an activator of lipoprotein lipase, the enzyme which hydrolyzes the triacylglycerols on chylomicrons and VLDL. The polypeptide is Apolipoprotein C-II (APOC2) (Acinonyx jubatus (Cheetah)).